The following is a 344-amino-acid chain: Heat-inducible transcription repressor HrcA (344 aa).

It belongs to the HrcA family.

Negative regulator of class I heat shock genes (grpE-dnaK-dnaJ and groELS operons). Prevents heat-shock induction of these operons. The polypeptide is Heat-inducible transcription repressor HrcA (Streptococcus sanguinis (strain SK36)).